We begin with the raw amino-acid sequence, 1726 residues long: Gag-Pro-Pol polyprotein (1726 aa).

The N-myristoyl glycine; by host moiety is linked to residue Gly2. A disordered region spans residues 103 to 148 (LKQEEDPLHTPDSVPSYDPPPPPPPSLKMHPSDNDDSLSSTDEAEL). Over residues 119–128 (YDPPPPPPPS) the composition is skewed to pro residues. Residues 202–205 (PSAP) carry the PTAP/PSAP motif motif. The short motif at 208–211 (PPAY) is the PPXY motif element. Residues 287–290 (PTAP) carry the PTAP/PSAP motif motif. The CCHC-type zinc-finger motif lies at 507–524 (SGCFVCGQPGHRAAVCPQ). The segment at 550–570 (RSKTDVQGNPLPPVSGNLGEG) is disordered. One can recognise a Peptidase A2 domain in the interval 734 to 810 (FRGVLDTGAD…LPVNLWGRDI (77 aa)). Asp739 (protease; shared with dimeric partner) is an active-site residue. The 46-residue stretch at 821 to 866 (PSPTVTDLMLDQGLLPNQGLGKQHQGIILPLDLKPNQDRKGLGCFP) folds into the G-patch domain. Residues 911-1099 (LRLGHIEPST…FPYNYLGFSL (189 aa)) form the Reverse transcriptase domain. Mg(2+) contacts are provided by Asp976, Asp1051, Asp1052, Asp1322, Glu1351, Asp1371, and Asp1436. One can recognise an RNase H type-1 domain in the interval 1313-1444 (IPEATLIFTD…ADVLTKQVFF (132 aa)). The Integrase-type zinc-finger motif lies at 1446–1487 (SAIDAARKSHDLHHQNSHSLRLQFKISREAARQIVKSCSTCP). Zn(2+)-binding residues include His1455, His1459, Cys1483, and Cys1486. Residues 1500-1659 (RGLRPNHLWQ…SAAQRFWGER (160 aa)) enclose the Integrase catalytic domain. Mg(2+) contacts are provided by Asp1511, Asp1568, and Glu1604. The segment at residues 1665–1714 (PLVRWKDPLTNLWYGPDPVLIWGRGHVCVFPQDAEAPRWIPERLVRAAEE) is a DNA-binding region (integrase-type).

This sequence belongs to the retroviral Pol polyprotein family. Homodimer. In terms of assembly, interacts with the G-patch peptide. As to quaternary structure, interacts with the reverse transcriptase/ribonuclease H. Homotrimer. Mg(2+) is required as a cofactor. In terms of processing, released by autocatalytic processing. The protease can undergo further autoprocessing to yield 2 shorter but enzymatically active forms of 12 kDa and 13 kDa. Myristoylated. Myristoylation of the matrix (MA) domain mediates the transport and binding of Gag polyproteins to the host plasma membrane and is required for the assembly of viral particles. Post-translationally, specific enzymatic cleavages in vivo yield mature proteins.

Its subcellular location is the virion. The enzyme catalyses DNA(n) + a 2'-deoxyribonucleoside 5'-triphosphate = DNA(n+1) + diphosphate. The catalysed reaction is Endonucleolytic cleavage to 5'-phosphomonoester.. It carries out the reaction dUTP + H2O = dUMP + diphosphate + H(+). In terms of biological role, matrix protein. Its function is as follows. Nucleocapsid protein p14: Nucleocapsid protein. Functionally, capsid protein. The aspartyl protease mediates proteolytic cleavages of Gag and Gag-Pol polyproteins during or shortly after the release of the virion from the plasma membrane. Cleavages take place as an ordered, step-wise cascade to yield mature proteins. This process is called maturation. Displays maximal activity during the budding process just prior to particle release from the cell. In terms of biological role, enhances the activity of the reverse transcriptase. May be part of the mature RT. Its function is as follows. RT is a multifunctional enzyme that converts the viral dimeric RNA genome into dsDNA in the cytoplasm, shortly after virus entry into the cell. This enzyme displays a DNA polymerase activity that can copy either DNA or RNA templates, and a ribonuclease H (RNase H) activity that cleaves the RNA strand of RNA-DNA heteroduplexes in a partially processive 3' to 5' endonucleasic mode. Conversion of viral genomic RNA into dsDNA requires many steps. A tRNA binds to the primer-binding site (PBS) situated at the 5' end of the viral RNA. RT uses the 3' end of the tRNA primer to perfom a short round of RNA-dependent minus-strand DNA synthesis. The reading proceeds through the U5 region and ends after the repeated (R) region which is present at both ends of viral RNA. The portion of the RNA-DNA heteroduplex is digested by the RNase H, resulting in a ssDNA product attached to the tRNA primer. This ssDNA/tRNA hybridizes with the identical R region situated at the 3' end of viral RNA. This template exchange, known as minus-strand DNA strong stop transfer, can be either intra- or intermolecular. RT uses the 3' end of this newly synthesized short ssDNA to perfom the RNA-dependent minus-strand DNA synthesis of the whole template. RNase H digests the RNA template except for a polypurine tract (PPT) situated at the 5' end of the genome. It is not clear if both polymerase and RNase H activities are simultaneous. RNase H probably can proceed both in a polymerase-dependent (RNA cut into small fragments by the same RT performing DNA synthesis) and a polymerase-independent mode (cleavage of remaining RNA fragments by free RTs). Secondly, RT performs DNA-directed plus-strand DNA synthesis using the PPT that has not been removed by RNase H as primers. PPT and tRNA primers are then removed by RNase H. The 3' and 5' ssDNA PBS regions hybridize to form a circular dsDNA intermediate. Strand displacement synthesis by RT to the PBS and PPT ends produces a blunt ended, linear dsDNA copy of the viral genome that includes long terminal repeats (LTRs) at both ends. Functionally, catalyzes viral DNA integration into the host chromosome, by performing a series of DNA cutting and joining reactions. This Ovis aries (Sheep) protein is Gag-Pro-Pol polyprotein (pol).